The chain runs to 701 residues: L-glutamate oxidase precursor (701 aa).

An N-terminal signal peptide occupies residues 1–14 (MTTDTARRHTGAER). FAD-binding residues include Ala69, Glu88, Ala89, Arg97, Met123, Arg124, Met354, and Ser409. Residues 481-520 (LALPQSVRNLPTGLLGAHPSVDESRIGEEQVEYYRNSELR) constitute a propeptide that is removed on maturation. The FAD site is built by Glu645, Trp653, and Ile654. A propeptide spanning residues 684–701 (RRGAAAATEPMREEALTS) is cleaved from the precursor.

This sequence belongs to the flavin monoamine oxidase family. LGOX subfamily. The LGOX precursor forms homodimers. The mature enzyme is a heterohexamer composed of 2 alpha chains, 2 beta chains and 2 gamma chains (alpha2beta2gamma2). FAD is required as a cofactor. Post-translationally, the precursor form is proteolytically cleaved by an endopeptidase into alpha, beta and gamma chains, which form the stable mature enzyme. Activation by proteolysis occurs after secretion.

The protein localises to the secreted. It catalyses the reaction L-glutamate + O2 + H2O = H2O2 + 2-oxoglutarate + NH4(+). With respect to regulation, produced as a single polypeptide precursor and is activated by proteolytic cleavage. The LGOX precursor is an active enzyme, but it exhibits lower catalytic efficiency and lower thermostability compared with the mature hexameric LGOX. The mature form is strongly inhibited by p-chloromercuribenzoate, but not by CuCl(2), EDTA and diethyldithiocarbamate. Functionally, catalyzes the oxidative deamination of L-glutamate to 2-ketoglutarate along with the production of ammonia and hydrogen peroxide. Shows strict substrate specificity for L-glutamate, and exhibits only very weak activity with L-aspartate. This chain is L-glutamate oxidase precursor, found in Streptomyces sp.